A 97-amino-acid chain; its full sequence is Large ribosomal subunit protein uL23 (97 aa).

Belongs to the universal ribosomal protein uL23 family. As to quaternary structure, part of the 50S ribosomal subunit. Contacts protein L29, and trigger factor when it is bound to the ribosome.

In terms of biological role, one of the early assembly proteins it binds 23S rRNA. One of the proteins that surrounds the polypeptide exit tunnel on the outside of the ribosome. Forms the main docking site for trigger factor binding to the ribosome. The protein is Large ribosomal subunit protein uL23 of Pelagibacter ubique (strain HTCC1062).